A 1865-amino-acid polypeptide reads, in one-letter code: Dedicator of cytokinesis protein 1 (1865 aa).

One can recognise an SH3 domain in the interval 9–70 (REEKYGVAFY…PASYIHLKEA (62 aa)). A C2 DOCK-type domain is found at 425-609 (RNDIYVTLVQ…DSFQISTLVC (185 aa)). Positions 1207–1617 (YKEIEREEMY…VEKQYGVRTM (411 aa)) constitute a DOCKER domain. Residues 1613–1723 (GVRTMPSGLD…FKPADSSLQQ (111 aa)) form a disordered region. The segment covering 1639-1664 (PSSSRPLSVASVSSFSSDSTPSRPGS) has biased composition (low complexity). The span at 1680-1694 (RSQDKLDKDDPDKEK) shows a compositional bias: basic and acidic residues. Ser-1681 is modified (phosphoserine). Residues 1687-1695 (KDDPDKEKK) are phosphoinositide-binding. Over residues 1695–1704 (KDKKKEKRNS) the composition is skewed to basic residues. A compositionally biased stretch (basic and acidic residues) spans 1705–1716 (KHQEIFDKEFKP). Ser-1743, Ser-1756, Ser-1761, and Ser-1764 each carry phosphoserine. Disordered stretches follow at residues 1753–1778 (RRFSVSPASPSSQQTPPPVTPRAKLS) and 1801–1865 (PLPL…GIVQ). Positions 1756–1766 (SVSPASPSSQQ) are enriched in low complexity. Residues Thr-1767 and Thr-1772 each carry the phosphothreonine modification. Positions 1793–1819 (MDVADVPPPLPLKGNMADYGNLMENQD) are interaction with NCK2 second and third SH3 domain (minor). The SH3-binding; interaction with CRK signature appears at 1799 to 1805 (PPPLPLK). The interaction with NCK2 third SH3 domain (major) stretch occupies residues 1820 to 1836 (MMVSPTSPPPPPPQRQQ). Positions 1825–1851 (TSPPPPPPQRQQPPPLPSKTPPPPPPK) are enriched in pro residues. The segment at 1837–1852 (PPPLPSKTPPPPPPKT) is interaction with NCK2 (minor). The SH3-binding; interaction with CRK signature appears at 1838-1843 (PPLPSK). Ser-1858 bears the Phosphoserine mark.

It belongs to the DOCK family. As to quaternary structure, interacts with the SH3 domains of CRK and NCK2 via multiple sites. Interacts with nucleotide-free RAC1 via its DOCKER domain. Interacts with ELMO1, ELMO2 and probably ELMO3 via its SH3 domain. Interacts with RAC1. Interacts with ELMO1 and ADGRB1. Identified in a complex with AUTS2 and ELMO2.

The protein resides in the cytoplasm. Its subcellular location is the membrane. Functionally, involved in cytoskeletal rearrangements required for phagocytosis of apoptotic cells and cell motility. Along with DOCK1, mediates CRK/CRKL regulation of epithelial and endothelial cell spreading and migration on type IV collagen. Functions as a guanine nucleotide exchange factor (GEF), which activates Rac Rho small GTPases by exchanging bound GDP for free GTP. Its GEF activity may be enhanced by ELMO1. This Mus musculus (Mouse) protein is Dedicator of cytokinesis protein 1 (Dock1).